The sequence spans 261 residues: Type III pantothenate kinase (261 aa).

Aspartate 6–threonine 13 provides a ligand contact to ATP. Substrate contacts are provided by residues tyrosine 100 and glycine 107 to arginine 110. Aspartate 109 serves as the catalytic Proton acceptor. A K(+)-binding site is contributed by aspartate 129. Residue threonine 132 participates in ATP binding. Threonine 184 contributes to the substrate binding site.

The protein belongs to the type III pantothenate kinase family. As to quaternary structure, homodimer. NH4(+) serves as cofactor. It depends on K(+) as a cofactor.

Its subcellular location is the cytoplasm. The enzyme catalyses (R)-pantothenate + ATP = (R)-4'-phosphopantothenate + ADP + H(+). It participates in cofactor biosynthesis; coenzyme A biosynthesis; CoA from (R)-pantothenate: step 1/5. In terms of biological role, catalyzes the phosphorylation of pantothenate (Pan), the first step in CoA biosynthesis. This Solibacter usitatus (strain Ellin6076) protein is Type III pantothenate kinase.